The following is a 319-amino-acid chain: Taste receptor type 2 member 30 (319 aa).

Position 1 (Met-1) is a topological domain, extracellular. The helical transmembrane segment at 2–22 (ITFLPIIFSILIVVIFVIGNF) threads the bilayer. The Cytoplasmic portion of the chain corresponds to 23–46 (ANGFIALVNSIEWVKRQKISFADQ). The chain crosses the membrane as a helical span at residues 47-67 (ILIALAVSRVGLLWALLLHWY). Residues 68–86 (ATELNLAFYSVEVRITAYN) are Extracellular-facing. Residues 87–107 (VWAVTNHFSNWLATSLSMFYL) form a helical membrane-spanning segment. The Cytoplasmic portion of the chain corresponds to 108–126 (LKIANFSNLIFLRIKRRVK). Residues 127 to 147 (SVILVILLGPLLFLVCHLFVI) form a helical membrane-spanning segment. At 148–178 (NMNEIVWTKEYEGNLTWKIKLRNAVFLSNMT) the chain is on the extracellular side. N-linked (GlcNAc...) asparagine glycosylation is found at Asn-161 and Asn-176. A helical membrane pass occupies residues 179-199 (LTMLANFVPLTLTLISFLLLI). Topologically, residues 200–229 (CSLCKHLKKMQLHGKGSQDPSTKVHIKALQ) are cytoplasmic. The chain crosses the membrane as a helical span at residues 230-250 (TVTCFLLLCAIYFLSMIISVY). Topologically, residues 251-259 (NFGRLEKKP) are extracellular. A helical membrane pass occupies residues 260 to 280 (VFMFCQAITFSYPSTHAFILI). The Cytoplasmic portion of the chain corresponds to 281 to 319 (WGNKKLKQIFLSVLWHVRYWVKDRSLRLHRFTRAALCKG).

The protein belongs to the G-protein coupled receptor T2R family.

It localises to the membrane. In terms of biological role, receptor that may play a role in the perception of bitterness and is gustducin-linked. May play a role in sensing the chemical composition of the gastrointestinal content. The activity of this receptor may stimulate alpha gustducin, mediate PLC-beta-2 activation and lead to the gating of TRPM5. The polypeptide is Taste receptor type 2 member 30 (TAS2R30) (Pongo pygmaeus (Bornean orangutan)).